The following is a 47-amino-acid chain: Photosystem II reaction center protein K (47 aa).

Residues 1–10 (MALINFDLLA) constitute a propeptide that is removed on maturation. The helical transmembrane segment at 26-46 (LPLIPLFFFLLVFVWQAAVGF) threads the bilayer.

It belongs to the PsbK family. As to quaternary structure, PSII is composed of 1 copy each of membrane proteins PsbA, PsbB, PsbC, PsbD, PsbE, PsbF, PsbH, PsbI, PsbJ, PsbK, PsbL, PsbM, PsbT, PsbX, PsbY, Psb30/Ycf12, peripheral proteins PsbO, CyanoQ (PsbQ), PsbU, PsbV and a large number of cofactors. It forms dimeric complexes.

Its subcellular location is the cellular thylakoid membrane. In terms of biological role, one of the components of the core complex of photosystem II (PSII). PSII is a light-driven water:plastoquinone oxidoreductase that uses light energy to abstract electrons from H(2)O, generating O(2) and a proton gradient subsequently used for ATP formation. It consists of a core antenna complex that captures photons, and an electron transfer chain that converts photonic excitation into a charge separation. In Prochlorococcus marinus (strain NATL2A), this protein is Photosystem II reaction center protein K.